Consider the following 231-residue polypeptide: Lipoprotein-releasing system ATP-binding protein LolD (231 aa).

An ABC transporter domain is found at 9–230 (FSLKDVGKEY…LRAGELYDQN (222 aa)). 45–52 (GASGSGKS) is a binding site for ATP.

Belongs to the ABC transporter superfamily. Lipoprotein translocase (TC 3.A.1.125) family. The complex is composed of two ATP-binding proteins (LolD) and two transmembrane proteins (LolC and LolE).

Its subcellular location is the cell inner membrane. Its function is as follows. Part of the ABC transporter complex LolCDE involved in the translocation of mature outer membrane-directed lipoproteins, from the inner membrane to the periplasmic chaperone, LolA. Responsible for the formation of the LolA-lipoprotein complex in an ATP-dependent manner. The protein is Lipoprotein-releasing system ATP-binding protein LolD of Oleidesulfovibrio alaskensis (strain ATCC BAA-1058 / DSM 17464 / G20) (Desulfovibrio alaskensis).